Reading from the N-terminus, the 131-residue chain is Agouti-signaling protein (131 aa).

The N-terminal stretch at 1-20 is a signal peptide; that stretch reads MNIFRLLLATLLVSLCFLTA. An N-linked (GlcNAc...) asparagine glycan is attached at N38. The tract at residues 57 to 104 is disordered; sequence KSKKISRKEAEKKRSSKKKASMKNVARPRPPPPNPCVATRNSCKSPAP. 5 disulfides stabilise this stretch: C92–C107, C99–C113, C106–C124, C110–C131, and C115–C122. The Agouti domain maps to 92–131; the sequence is CVATRNSCKSPAPACCDPCASCQCRFFRSACTCRVLSPSC.

The protein localises to the secreted. Involved in the regulation of melanogenesis. The binding of ASP to MC1R precludes alpha-MSH initiated signaling and thus blocks production of cAMP, leading to a down-regulation of eumelanogenesis (brown/black pigment) and thus increasing synthesis of pheomelanin (yellow/red pigment). In Vulpes vulpes (Red fox), this protein is Agouti-signaling protein (ASIP).